The chain runs to 212 residues: External core antigen (212 aa).

The N-terminal stretch at 1-19 (MQLFHLCLIISCSCPTVQA) is a signal peptide. An HBEAG region spans residues 25–27 (GWL). Residues 172–212 (LPETTVVRRRGRSPRRRTPSPRRRRSKSPRRRRSQSRESQC) form a disordered region. Residues 178-205 (VRRRGRSPRRRTPSPRRRRSKSPRRRRS) show a composition bias toward basic residues. The stretch at 184–189 (SPRRRT) is one 1; half-length repeat. The 3 X 7 AA repeats of S-P-R-R-R-R-S stretch occupies residues 184–205 (SPRRRTPSPRRRRSKSPRRRRS). The propeptide occupies 184 to 212 (SPRRRTPSPRRRRSKSPRRRRSQSRESQC). 2 consecutive repeat copies span residues 191 to 197 (SPRRRRS) and 199 to 205 (SPRRRRS).

Belongs to the orthohepadnavirus precore antigen family. As to quaternary structure, homodimerizes. Phosphorylated. Post-translationally, cleaved by host furin.

Its subcellular location is the secreted. It is found in the host nucleus. In terms of biological role, may regulate immune response to the intracellular capsid in acting as a T-cell tolerogen, by having an immunoregulatory effect which prevents destruction of infected cells by cytotoxic T-cells. This immune regulation may predispose to chronicity during perinatal infections and prevent severe liver injury during adult infections. The polypeptide is External core antigen (Hepatitis B virus genotype C subtype adr (isolate Japan/Nishioka/1983) (HBV-C)).